The primary structure comprises 313 residues: Fe-S cluster assembly protein dre2 (313 aa).

Disordered stretches follow at residues 1-25 and 151-187; these read MSIT…SQKR and GRKK…AQNN. The tract at residues 20-145 is N-terminal SAM-like domain; it reads NGSQKRNLLL…FEKPVQEAAV (126 aa). The tract at residues 146-203 is linker; it reads PLKLGGRKKKDKTNGVNGVQNGVATNGASTNGVGMFDPAQNNDDELIDEDALLSDDDL. Positions 159-177 are enriched in polar residues; it reads NGVNGVQNGVATNGASTNG. [2Fe-2S] cluster is bound by residues cysteine 213, cysteine 225, cysteine 228, and cysteine 230. The tract at residues 213-230 is fe-S binding site A; it reads CVPETAKKRRRPCKDCTC. [4Fe-4S] cluster-binding residues include cysteine 276, cysteine 279, cysteine 287, and cysteine 290. 2 consecutive short sequence motifs (cx2C motif) follow at residues 276–279 and 287–290; these read CNSC and CSSC. Residues 276 to 290 form a fe-S binding site B region; sequence CNSCSLGDAFRCSSC.

It belongs to the anamorsin family. Monomer. Interacts with tah18. Interacts with mia40. [2Fe-2S] cluster is required as a cofactor. The cofactor is [4Fe-4S] cluster.

It is found in the cytoplasm. The protein resides in the mitochondrion intermembrane space. Functionally, component of the cytosolic iron-sulfur (Fe-S) protein assembly (CIA) machinery required for the maturation of extramitochondrial Fe-S proteins. Part of an electron transfer chain functioning in an early step of cytosolic Fe-S biogenesis, facilitating the de novo assembly of a [4Fe-4S] cluster on the scaffold complex cfd1-nbp35. Electrons are transferred to dre2 from NADPH via the FAD- and FMN-containing protein tah18. Tah18-dre2 are also required for the assembly of the diferric tyrosyl radical cofactor of ribonucleotide reductase (RNR), probably by providing electrons for reduction during radical cofactor maturation in the catalytic small subunit rnr2. The chain is Fe-S cluster assembly protein dre2 from Aspergillus oryzae (strain ATCC 42149 / RIB 40) (Yellow koji mold).